The chain runs to 94 residues: MNKTELIDGVAAAANLSKVEAGRAIDAVVNEITEALKEGDSVTLVGFGTFQVRQRAERPGRNPKTGEPIMIAASNNPSFKPGKALKDAVKSSAG.

The interval 55–94 is disordered; sequence RAERPGRNPKTGEPIMIAASNNPSFKPGKALKDAVKSSAG. Residues 84–94 are compositionally biased toward basic and acidic residues; that stretch reads ALKDAVKSSAG.

Belongs to the bacterial histone-like protein family.

Histone-like DNA-binding protein which is capable of wrapping DNA to stabilize it, and thus to prevent its denaturation under extreme environmental conditions. This is DNA-binding protein HU (hup) from Xylella fastidiosa (strain Temecula1 / ATCC 700964).